We begin with the raw amino-acid sequence, 339 residues long: N-acetyl-gamma-glutamyl-phosphate reductase (339 aa).

Residue Cys-145 is part of the active site.

This sequence belongs to the NAGSA dehydrogenase family. Type 1 subfamily.

It is found in the cytoplasm. It carries out the reaction N-acetyl-L-glutamate 5-semialdehyde + phosphate + NADP(+) = N-acetyl-L-glutamyl 5-phosphate + NADPH + H(+). Its pathway is amino-acid biosynthesis; L-arginine biosynthesis; N(2)-acetyl-L-ornithine from L-glutamate: step 3/4. In terms of biological role, catalyzes the NADPH-dependent reduction of N-acetyl-5-glutamyl phosphate to yield N-acetyl-L-glutamate 5-semialdehyde. In Thermotoga maritima (strain ATCC 43589 / DSM 3109 / JCM 10099 / NBRC 100826 / MSB8), this protein is N-acetyl-gamma-glutamyl-phosphate reductase.